The sequence spans 310 residues: Cytochrome f (310 aa).

Positions 1 to 23 (MRRLLSSTFAALIVGLAVFSAPA) are cleaved as a signal peptide. Residues Tyr-28, Cys-48, Cys-51, and His-52 each coordinate heme. A helical transmembrane segment spans residues 277 to 297 (IYGMLAFFAAVALAQIMLVLK).

The protein belongs to the cytochrome f family. As to quaternary structure, the 4 large subunits of the cytochrome b6-f complex are cytochrome b6, subunit IV (17 kDa polypeptide, PetD), cytochrome f and the Rieske protein, while the 4 small subunits are PetG, PetL, PetM and PetN. The complex functions as a dimer. The cofactor is heme.

The protein resides in the cellular thylakoid membrane. Its function is as follows. Component of the cytochrome b6-f complex, which mediates electron transfer between photosystem II (PSII) and photosystem I (PSI), cyclic electron flow around PSI, and state transitions. This Synechococcus sp. (strain CC9311) protein is Cytochrome f.